The following is a 316-amino-acid chain: Protoheme IX farnesyltransferase 2 (316 aa).

Positions M1 to A15 are enriched in polar residues. Residues M1–S24 form a disordered region. 7 helical membrane passes run I62 to F82, I117 to F137, I163 to I183, I188 to I208, T231 to S251, L252 to I272, and L293 to F313.

Belongs to the UbiA prenyltransferase family. Protoheme IX farnesyltransferase subfamily. As to quaternary structure, interacts with CtaA.

It localises to the cell membrane. It carries out the reaction heme b + (2E,6E)-farnesyl diphosphate + H2O = Fe(II)-heme o + diphosphate. Its pathway is porphyrin-containing compound metabolism; heme O biosynthesis; heme O from protoheme: step 1/1. Functionally, converts heme B (protoheme IX) to heme O by substitution of the vinyl group on carbon 2 of heme B porphyrin ring with a hydroxyethyl farnesyl side group. The sequence is that of Protoheme IX farnesyltransferase 2 from Lysinibacillus sphaericus (strain C3-41).